Consider the following 153-residue polypeptide: Arginine repressor (153 aa).

The protein belongs to the ArgR family.

The protein resides in the cytoplasm. It participates in amino-acid biosynthesis; L-arginine biosynthesis [regulation]. Regulates arginine biosynthesis genes. This chain is Arginine repressor, found in Actinobacillus pleuropneumoniae serotype 7 (strain AP76).